We begin with the raw amino-acid sequence, 127 residues long: I-Kappa-B like protein J1 (127 aa).

ANK repeat units follow at residues 43-76 and 81-111; these read HGNT…DLDE and DGDT…RFGS.

Belongs to the polydnaviridae I-Kappa-B-like protein family.

In terms of biological role, suppresses the host immune response through NF-kappa-B inactivation. Possesses ankyrin repeat domains required for NF-kappa-B binding but lacks the regulatory regions required for dissociation from NF-kappa-B and degradation. Therefore, prevents host NF-kappa-B release and subsequent activation. The protein is I-Kappa-B like protein J1 (J2) of Microplitis demolitor (Parasitoid wasp).